Here is a 215-residue protein sequence, read N- to C-terminus: Beta-crystallin A3-2 (215 aa).

An N-terminal arm region spans residues 1-30; that stretch reads MEIPAIQTEREDITSEKMAQINPLPVPLGP. Beta/gamma crystallin 'Greek key' domains follow at residues 31–70 and 71–117; these read WKIT…KVEC and GAWI…RPIC. The connecting peptide stretch occupies residues 118-123; the sequence is SANHEE. 2 Beta/gamma crystallin 'Greek key' domains span residues 124–165 and 166–214; these read SKLV…KVQC and GAWV…RRIQ.

It belongs to the beta/gamma-crystallin family. Homo/heterodimer, or complexes of higher-order. The structure of beta-crystallin oligomers seems to be stabilized through interactions between the N-terminal arms. Post-translationally, the N-terminus is blocked.

Functionally, crystallins are the dominant structural components of the vertebrate eye lens. In Aquarana catesbeiana (American bullfrog), this protein is Beta-crystallin A3-2.